We begin with the raw amino-acid sequence, 1241 residues long: RNA polymerase II C-terminal domain phosphatase-like 3 (1241 aa).

7 disordered regions span residues 361 to 402, 428 to 470, 505 to 525, 578 to 598, 677 to 702, 720 to 800, and 852 to 885; these read DHDA…TTEG, VFKT…HLIY, ISAP…RDPR, KRQK…WLED, AIQK…VSTP, VLQD…QNGT, and TERD…GPTR. Polar residues predominate over residues 368–378; it reads PSPTRETTPSL. Positions 441-466 are enriched in low complexity; the sequence is GEPNDGNGDVGGEVSSSVVKSSNPGS. Basic and acidic residues predominate over residues 677 to 686; the sequence is AIQKPMDPRR. Polar residues-rich tracts occupy residues 691 to 702 and 791 to 800; these read PGSSVQPGVSTP and PRQNISQNGT. The span at 871-881 shows a compositional bias: low complexity; sequence SVSAASVTAAA. Residues 923–1103 form the FCP1 homology domain; that stretch reads FASQKLSLVL…GLLGPSLLEL (181 aa). A BRCT domain is found at 1146-1239; sequence EQRKILAGCR…QRANENLYAI (94 aa).

As to quaternary structure, interacts with RAP74. Requires Mg(2+) as cofactor. The cofactor is Co(2+). Mn(2+) is required as a cofactor.

The protein localises to the nucleus. It catalyses the reaction O-phospho-L-seryl-[protein] + H2O = L-seryl-[protein] + phosphate. The enzyme catalyses O-phospho-L-threonyl-[protein] + H2O = L-threonyl-[protein] + phosphate. In terms of biological role, completely dephosphorylates 'Ser-2', and partially 'Ser-5' and 'Ser-7' of the heptad repeats YSPTSPS in the C-terminal domain (CTD) of the largest RNA polymerase II subunit (RPB1). Involved in defense response. Acts as a negative regulator of immune gene expression and immunity to pathogen infections. Preferentially dephosphorylates 'Ser-2' of RNA polymerase II CTD. This counterregulates the MAP kinase (MAPK) or cyclin-dependent kinase C (CDKC)-mediated phosphorylation of CTD in response to pathogens and upon perception of microbe-associated molecular patterns (MAMPs). MAPKs phosphorylate and activate CDKCs, which are CTD kinases that positively regulate plant innate immunity. Acts as a negative regulator of stress gene transcription involved in abscisic acid (ABA) mediated signaling pathway and cold resistance. Acts as a post-transcriptional gene silencing (PTGS) suppressor. This chain is RNA polymerase II C-terminal domain phosphatase-like 3, found in Arabidopsis thaliana (Mouse-ear cress).